The primary structure comprises 513 residues: Zinc finger CCCH-type with G patch domain-containing protein (513 aa).

The residue at position 1 (methionine 1) is an N-acetylmethionine. The segment at 90–131 is disordered; it reads EVPVAPGAELETVPSRETGPGPTERGQEEDDGEDEEGGAALS. Over residues 116-126 the composition is skewed to acidic residues; sequence QEEDDGEDEEG. Residues 176–202 form a C3H1-type zinc finger; it reads KSLKPCSFFLEGKCRFQENCRFSHGQV. Residues 267-296 are disordered; sequence LPPLRTEPAGSSDSDGSDADDPSYARVVEP. Phosphoserine occurs at positions 278 and 355. The G-patch domain occupies 315 to 361; the sequence is TRGIGSRLLAKMGYEFGKGLGRHAEGRVEPVHAVVLPRGKSLDQCAE. Disordered regions lie at residues 367 to 394 and 492 to 513; these read TRAG…PPPR and AQEA…MTEF. Residues 497 to 513 are compositionally biased toward basic and acidic residues; sequence LQREQRKADTHKKMTEF.

Interacts with CHD4/Mi-2; the interaction is direct.

The protein resides in the nucleus. Transcription repressor that specifically binds the 5'-GGAG[GA]A[GA]A-3' consensus sequence. Represses transcription by recruiting the chromatin multiprotein complex NuRD to target promoters. Negatively regulates expression of EGFR, a gene involved in cell proliferation, survival and migration. Its ability to repress genes of the EGFR pathway suggest it may act as a tumor suppressor. The chain is Zinc finger CCCH-type with G patch domain-containing protein (ZGPAT) from Bos taurus (Bovine).